Consider the following 244-residue polypeptide: Myrosinase MB1 (244 aa).

A glycan (N-linked (GlcNAc...) asparagine) is linked at N32. Residue Y51 participates in substrate binding. E125 functions as the Nucleophile in the catalytic mechanism. Substrate-binding positions include W173 and 180–181 (EF). A glycan (N-linked (GlcNAc...) asparagine) is linked at N216.

Belongs to the glycosyl hydrolase 1 family. Homodimer. As to expression, in vacuoles called myrosin grains of a certain class of cells, myrosin cells, distributed in the cotyledons and the axis of the embryo as well as in different organs of the growing plant.

The protein localises to the vacuole. It carries out the reaction a thioglucoside + H2O = a sugar + a thiol.. In terms of biological role, degradation of glucosinolates (glucose residue linked by a thioglucoside bound to an amino acid derivative) to glucose, sulfate and any of the products: thiocyanates, isothiocyanates, nitriles, epithionitriles or oxazolidine-2-thiones. The protein is Myrosinase MB1 of Sinapis alba (White mustard).